An 814-amino-acid chain; its full sequence is Acyl-coenzyme A dehydrogenase (814 aa).

The active-site Proton acceptor is glutamate 497.

The protein belongs to the acyl-CoA dehydrogenase family. FAD serves as cofactor.

The catalysed reaction is a medium-chain 2,3-saturated fatty acyl-CoA + oxidized [electron-transfer flavoprotein] + H(+) = a medium-chain (2E)-enoyl-CoA + reduced [electron-transfer flavoprotein]. It catalyses the reaction a long-chain 2,3-saturated fatty acyl-CoA + oxidized [electron-transfer flavoprotein] + H(+) = a long-chain (2E)-enoyl-CoA + reduced [electron-transfer flavoprotein]. It functions in the pathway lipid metabolism; fatty acid beta-oxidation. Functionally, catalyzes the dehydrogenation of acyl-coenzymes A (acyl-CoAs) to 2-enoyl-CoAs, the first step of the beta-oxidation cycle of fatty acid degradation. Is required for S.typhimurium to utilize medium- and long-chain fatty acids as sole carbon sources for growth. Is needed for bacterial survival during carbone-source starvation. In Salmonella typhimurium (strain LT2 / SGSC1412 / ATCC 700720), this protein is Acyl-coenzyme A dehydrogenase (fadE).